Consider the following 307-residue polypeptide: N-acetylneuraminate lyase (307 aa).

Aceneuramate-binding residues include T51 and T52. The active-site Proton donor is the Y143. Catalysis depends on K173, which acts as the Schiff-base intermediate with substrate. The aceneuramate site is built by S175, G199, D201, E202, and S218.

Belongs to the DapA family. NanA subfamily. As to quaternary structure, homotetramer.

It localises to the cytoplasm. It catalyses the reaction aceneuramate = aldehydo-N-acetyl-D-mannosamine + pyruvate. The protein operates within amino-sugar metabolism; N-acetylneuraminate degradation. In terms of biological role, catalyzes the cleavage of N-acetylneuraminic acid (sialic acid) to form pyruvate and N-acetylmannosamine via a Schiff base intermediate. It prevents sialic acids from being recycled and returning to the cell surface. Involved in the N-glycolylneuraminic acid (Neu5Gc) degradation pathway. In Danio rerio (Zebrafish), this protein is N-acetylneuraminate lyase.